The sequence spans 282 residues: S-formylglutathione hydrolase (282 aa).

The residue at position 2 (Ala2) is an N-acetylalanine. Position 4 is an N6-succinyllysine (Lys4). Ser149 (charge relay system) is an active-site residue. An N6-acetyllysine modification is found at Lys200. Active-site charge relay system residues include Asp226 and His260.

It belongs to the esterase D family. Homodimer.

Its subcellular location is the cytoplasm. The protein resides in the cytoplasmic vesicle. It carries out the reaction S-formylglutathione + H2O = formate + glutathione + H(+). Serine hydrolase involved in the detoxification of formaldehyde. This chain is S-formylglutathione hydrolase (Esd), found in Mus musculus (Mouse).